Consider the following 1506-residue polypeptide: Phosphatidylinositol 3-kinase C2 domain-containing subunit gamma (1506 aa).

The disordered stretch occupies residues 1-34 (MAYSWQTEPNRTEPQEDGSDTQQFHHTNQHLSSR). Polar residues predominate over residues 20–34 (DTQQFHHTNQHLSSR). Residues 285-371 (DTKFRVKISI…IQLHLQKNRD (87 aa)) form the PI3K-RBD domain. The C2 PI3K-type domain occupies 541-689 (LQSHLSFTVC…SPLTLQIDFP (149 aa)). Residues 704–880 (RTDHEEPPRE…QELLAALQFC (177 aa)) form the PIK helical domain. Residues 949–1227 (DRDACSYFTS…KIKESLECFP (279 aa)) form the PI3K/PI4K catalytic domain. Residues 955-961 (YFTSNAS) are G-loop. The interval 1091 to 1099 (GVCDRHNDN) is catalytic loop. The segment at 1110-1136 (HIDFGKFLGHAQTFGGIKRDRAPFIFT) is activation loop. The PX domain occupies 1260–1372 (LNKTRTIQRV…SFFLSEHIQP (113 aa)). The C2 domain maps to 1381-1506 (DPGENSLDKS…KWYPLGNSII (126 aa)).

This sequence belongs to the PI3/PI4-kinase family. In terms of tissue distribution, expressed predominantly in liver. Also found in kidney, lung and lymphoid tissue. Down-regulated in BeF3 cells expressing the BCR-ABL oncogene p185.

The protein resides in the membrane. It catalyses the reaction a 1,2-diacyl-sn-glycero-3-phospho-(1D-myo-inositol 4-phosphate) + ATP = a 1,2-diacyl-sn-glycero-3-phospho-(1D-myo-inositol-3,4-bisphosphate) + ADP + H(+). The catalysed reaction is a 1,2-diacyl-sn-glycero-3-phospho-(1D-myo-inositol) + ATP = a 1,2-diacyl-sn-glycero-3-phospho-(1D-myo-inositol-3-phosphate) + ADP + H(+). Generates phosphatidylinositol 3-phosphate (PtdIns3P) and phosphatidylinositol 3,4-bisphosphate (PtdIns(3,4)P2) that act as second messengers. May play a role in SDF1A-stimulated chemotaxis. This is Phosphatidylinositol 3-kinase C2 domain-containing subunit gamma (Pik3c2g) from Mus musculus (Mouse).